The chain runs to 226 residues: Charged multivesicular body protein 5 (226 aa).

Residues 21–93 (IAGVDARATN…NQSFNMEQAN (73 aa)) are a coiled coil. Over residues 188–198 (KAPEAPSREPG) the composition is skewed to basic and acidic residues. A disordered region spans residues 188–226 (KAPEAPSREPGADSIVPGKSTIETDEFGLPKIPTSLKTT). The residue at position 201 (serine 201) is a Phosphoserine. A Phosphothreonine modification is found at threonine 226.

The protein belongs to the SNF7 family. In terms of assembly, probable peripherally associated component of the endosomal sorting required for transport complex III (ESCRT-III).

It localises to the endosome membrane. Functionally, probable peripherally associated component of the endosomal sorting required for transport complex III (ESCRT-III) which is involved in multivesicular bodies (MVBs) formation and sorting of endosomal cargo proteins into MVBs. MVBs contain intraluminal vesicles (ILVs) that are generated by invagination and scission from the limiting membrane of the endosome and are delivered to lysosomes enabling degradation of membrane proteins. Specifically down-regulates Notch signaling activity in the germarium, probably by facilitating Notch endocytosis. The sequence is that of Charged multivesicular body protein 5 from Drosophila melanogaster (Fruit fly).